Here is a 346-residue protein sequence, read N- to C-terminus: [LysW]-lysine/[LysW]-ornithine hydrolase (346 aa).

Histidine 68 contacts Zn(2+). Aspartate 70 is an active-site residue. Aspartate 92 lines the Zn(2+) pocket. Glutamate 122 functions as the Proton acceptor in the catalytic mechanism. The Zn(2+) site is built by glutamate 123, glutamate 146, and histidine 317.

Belongs to the peptidase M20A family. LysK subfamily. The cofactor is Zn(2+). It depends on Co(2+) as a cofactor.

The protein resides in the cytoplasm. The catalysed reaction is [amino-group carrier protein]-C-terminal-gamma-(L-lysyl)-L-glutamate + H2O = [amino-group carrier protein]-C-terminal-L-glutamate + L-lysine. It carries out the reaction [amino-group carrier protein]-C-terminal-gamma-(L-ornithyl)-L-glutamate + H2O = [amino-group carrier protein]-C-terminal-L-glutamate + L-ornithine. It participates in amino-acid biosynthesis; L-lysine biosynthesis via AAA pathway; L-lysine from L-alpha-aminoadipate (Thermus route): step 5/5. The protein operates within amino-acid biosynthesis; L-arginine biosynthesis. Functionally, catalyzes the release of L-lysine from [LysW]-gamma-L-lysine and the release of L-ornithine from [LysW]-L-ornithine. The chain is [LysW]-lysine/[LysW]-ornithine hydrolase from Saccharolobus islandicus (strain Y.N.15.51 / Yellowstone #2) (Sulfolobus islandicus).